Consider the following 81-residue polypeptide: Salivary thrombin inhibitor anophelin (81 aa).

Positions 1–22 (MANKLFLISLLCVVLVAKIAQA) are cleaved as a signal peptide. N-linked (GlcNAc...) asparagine glycosylation is present at N45. The interval 70–73 (DPGR) is blocks active site cleft of host thrombin in a reverse direction compared to substrates.

It belongs to the anophelin family. As to quaternary structure, interacts with human F2 (thrombin); the interaction results in thrombin inhibition.

The protein resides in the secreted. Functionally, salivary protein with anticoagulant activity that inhibits host thrombin (F2). The protein is Salivary thrombin inhibitor anophelin of Anopheles darlingi (Mosquito).